A 288-amino-acid chain; its full sequence is UDP-3-O-acyl-N-acetylglucosamine deacetylase (288 aa).

Zn(2+) contacts are provided by His-79, His-236, and Asp-240. The active-site Proton donor is the His-263.

This sequence belongs to the LpxC family. Zn(2+) is required as a cofactor.

The enzyme catalyses a UDP-3-O-[(3R)-3-hydroxyacyl]-N-acetyl-alpha-D-glucosamine + H2O = a UDP-3-O-[(3R)-3-hydroxyacyl]-alpha-D-glucosamine + acetate. It participates in glycolipid biosynthesis; lipid IV(A) biosynthesis; lipid IV(A) from (3R)-3-hydroxytetradecanoyl-[acyl-carrier-protein] and UDP-N-acetyl-alpha-D-glucosamine: step 2/6. In terms of biological role, catalyzes the hydrolysis of UDP-3-O-myristoyl-N-acetylglucosamine to form UDP-3-O-myristoylglucosamine and acetate, the committed step in lipid A biosynthesis. The sequence is that of UDP-3-O-acyl-N-acetylglucosamine deacetylase from Rickettsia africae (strain ESF-5).